Consider the following 757-residue polypeptide: Cellulose synthase-like protein B2 (757 aa).

The next 2 membrane-spanning stretches (helical) occupy residues 24–44 (AVDLTILGLLFSLLLHRILYM) and 48–68 (GIIWLVAFLCESCFSFVWLLS). Catalysis depends on residues D136 and D461. 6 helical membrane passes run 533-555 (AYLCVSICVRSIPELIYCLLPAY), 568-588 (LCLGITMLLAGMHCLYTLWEF), 607-627 (IVATSSWLFSIFDIILKLLGL), 672-692 (FLPGTFIVLVNLAALVGVFVG), 704-724 (GSGLGEACACILVVMLFFPFL), and 735-755 (IPLSTLSKAGFLAVSFVVFSV).

It belongs to the glycosyltransferase 2 family. Plant cellulose synthase-like B subfamily. In terms of tissue distribution, expressed in young seedlings, primarily in the root vascular tissue.

It localises to the golgi apparatus membrane. In terms of biological role, thought to be a Golgi-localized beta-glycan synthase that polymerize the backbones of noncellulosic polysaccharides (hemicelluloses) of plant cell wall. The chain is Cellulose synthase-like protein B2 (CSLB2) from Arabidopsis thaliana (Mouse-ear cress).